The sequence spans 620 residues: Rhamnogalacturonan endolyase YesW (620 aa).

Positions 1-37 are cleaved as a signal peptide; sequence MRRSCLMIRRRKRMFTAVTLLVLLVMGTSVCPVKAEG. The disordered stretch occupies residues 133 to 152; that stretch reads LDKPAGGTTPKGESYTYSAN. Substrate is bound at residue asparagine 152. Ca(2+)-binding residues include aspartate 153, aspartate 158, aspartate 160, aspartate 162, glutamine 164, and glutamate 166. Aspartate 172 contributes to the substrate binding site. A carbohydrate-binding residues include aspartate 187 and lysine 207. Ca(2+) contacts are provided by aspartate 222, aspartate 224, aspartate 226, lysine 228, and glutamate 230. 2 residues coordinate a carbohydrate: glycine 238 and arginine 255. The Ca(2+) site is built by histidine 363, aspartate 369, aspartate 371, aspartate 373, lysine 375, glutamate 377, aspartate 386, histidine 387, histidine 399, aspartate 401, aspartate 407, aspartate 409, arginine 412, glycine 414, glutamate 416, and glutamate 422. A substrate-binding site is contributed by arginine 452. Ca(2+) contacts are provided by aspartate 457, aspartate 459, tyrosine 462, glycine 464, glutamate 466, aspartate 496, aspartate 498, leucine 500, and glutamate 502. Substrate is bound at residue 532-534; sequence NGT. The Ca(2+) site is built by aspartate 543, leucine 545, aspartate 547, arginine 549, glutamate 551, asparagine 592, and alanine 594. Residue tyrosine 595 coordinates substrate. Asparagine 596 contributes to the Ca(2+) binding site.

This sequence belongs to the polysaccharide lyase 11 family. Monomer. Ca(2+) serves as cofactor. Mn(2+) is required as a cofactor.

The protein localises to the secreted. It carries out the reaction Endotype eliminative cleavage of L-alpha-rhamnopyranosyl-(1-&gt;4)-alpha-D-galactopyranosyluronic acid bonds of rhamnogalacturonan I domains in ramified hairy regions of pectin leaving L-rhamnopyranose at the reducing end and 4-deoxy-4,5-unsaturated D-galactopyranosyluronic acid at the non-reducing end.. Functionally, pectinolytic enzyme that degrades type I rhamnogalacturonan from plant cell walls and releases oligosaccharide products. Degrades rhamnogalacturonan, polygalacturonic acid, pectic acid and pectin. The sequence is that of Rhamnogalacturonan endolyase YesW (yesW) from Bacillus subtilis (strain 168).